Reading from the N-terminus, the 96-residue chain is Large ribosomal subunit protein uL4 (96 aa).

A disordered region spans residues 77-96; sequence RAPNKKVKRRELKKNPLKNL. The span at 79–96 shows a compositional bias: basic residues; the sequence is PNKKVKRRELKKNPLKNL.

The protein belongs to the universal ribosomal protein uL4 family. In terms of assembly, component of the large ribosomal subunit.

It localises to the cytoplasm. In terms of biological role, component of the large ribosomal subunit. The ribosome is a large ribonucleoprotein complex responsible for the synthesis of proteins in the cell. This Xenopus tropicalis (Western clawed frog) protein is Large ribosomal subunit protein uL4 (rpl4).